We begin with the raw amino-acid sequence, 379 residues long: Citrate synthase (379 aa).

Active-site residues include His-225, His-265, and Asp-316.

The protein belongs to the citrate synthase family. Homodimer.

It carries out the reaction oxaloacetate + acetyl-CoA + H2O = citrate + CoA + H(+). The protein operates within carbohydrate metabolism; tricarboxylic acid cycle; isocitrate from oxaloacetate: step 1/2. Functionally, might regulate the synthesis and function of enzymes involved in later enzymatic steps of Krebs cycle. The chain is Citrate synthase (citZ) from Haloferax volcanii (strain ATCC 29605 / DSM 3757 / JCM 8879 / NBRC 14742 / NCIMB 2012 / VKM B-1768 / DS2) (Halobacterium volcanii).